The sequence spans 114 residues: Kininogen-2 (114 aa).

A signal peptide spans 1–23 (MRLWFCLSFFIVLCLEHFPGTLA). Residues 35–45 (TRLHGHHKPSR) show a composition bias toward basic residues. The disordered stretch occupies residues 35-114 (TRLHGHHKPS…QIPGLGPLRG (80 aa)). The span at 65 to 80 (PESEEKTEQFLRDLPK) shows a compositional bias: basic and acidic residues. Arg-113 is subject to Arginine amide.

The protein belongs to the bradykinin-related peptide family. Expressed by the skin glands.

It localises to the secreted. Its function is as follows. Potent vasodilator. Binds B1 (BDKRB1) and B2 (BDKRB2) bradykinin receptors. The chain is Kininogen-2 from Bombina maxima (Giant fire-bellied toad).